Consider the following 292-residue polypeptide: Elongation factor Ts (292 aa).

The segment at Thr79–Val82 is involved in Mg(2+) ion dislocation from EF-Tu.

It belongs to the EF-Ts family.

It localises to the cytoplasm. Its function is as follows. Associates with the EF-Tu.GDP complex and induces the exchange of GDP to GTP. It remains bound to the aminoacyl-tRNA.EF-Tu.GTP complex up to the GTP hydrolysis stage on the ribosome. This Xylella fastidiosa (strain 9a5c) protein is Elongation factor Ts.